The following is a 505-amino-acid chain: Deoxyguanosinetriphosphate triphosphohydrolase (505 aa).

In terms of domain architecture, HD spans 66–273; that stretch reads RLTHSMEVQQ…MEAADDISYC (208 aa).

This sequence belongs to the dGTPase family. Type 1 subfamily. Homotetramer. Mg(2+) is required as a cofactor.

The enzyme catalyses dGTP + H2O = 2'-deoxyguanosine + triphosphate + H(+). Its function is as follows. dGTPase preferentially hydrolyzes dGTP over the other canonical NTPs. This is Deoxyguanosinetriphosphate triphosphohydrolase from Salmonella enteritidis PT4 (strain P125109).